Here is a 292-residue protein sequence, read N- to C-terminus: Protein sarah (292 aa).

Residues 1–51 are compositionally biased toward low complexity; sequence MSDAAKSNNNASADAPDPTTPDATGEADAANAATPTTPRGNHNNNNSANGR. The segment at 1-111 is disordered; the sequence is MSDAAKSNNN…TEPEVDADSF (111 aa). S67, S72, and S100 each carry phosphoserine. The segment covering 98–111 has biased composition (acidic residues); the sequence is VDSDTEPEVDADSF. A phosphothreonine mark is found at T102 and T196. Phosphoserine occurs at positions 215 and 219. Position 246 is a phosphothreonine (T246).

This sequence belongs to the RCAN family. In terms of assembly, interacts with Pp2B-14D, CanA-14F and CanB2. Phosphorylation at Ser-215 and Ser-219 is essential for calcineurin activation and completion of female meiosis. Sgg is required for phosphorylation of Ser-215 in activated eggs. Ser-100, Thr-102 and Ser-219 are highly phosphorylated in both ovaries and activated eggs; however, phosphorylation at Ser-100 or Thr-102 is not required for sra function in completion of female meiosis. Expressed in central nervous system of the third instar larvae, with a relatively intense signal in the brain and weak signals in the ventral ganglion. Relatively low, but ubiquitous expression level is observed in leg and wing imaginal disks, no signal is detected in the eye-antennal disks. Expressed in all neurons in the adult brain.

In terms of biological role, required for elongation of meiosis I spindle. Critical for ovulation, meiotic progression in oocytes and female courtship behavior, including their postmating changes. Regulates female meiosis by controlling calcineurin activity in the germline. Has a role in calcium signaling during egg activation; bcd mRNA polyadenylation and translation in the oocyte. The protein is Protein sarah (sra) of Drosophila melanogaster (Fruit fly).